The primary structure comprises 366 residues: Zinc-regulated GTPase metalloprotein activator 1 (366 aa).

A psi-PxLVp motif motif is present at residues 5–12; that stretch reads DECPELVP. 31–38 provides a ligand contact to GTP; that stretch reads GYLGAGKT. The Zn(2+) site is built by Cys89, Cys91, and Cys92. The CXCC motif motif lies at 89-92; sequence CLCC. GTP is bound by residues 92-96 and 185-188; these read CSVKD and NKTD. The CobW C-terminal domain maps to 258 to 357; that stretch reads TITFEVPGSV…GEILKKEFIS (100 aa).

This sequence belongs to the SIMIBI class G3E GTPase family. ZNG1 subfamily.

Its subcellular location is the nucleus. It carries out the reaction GTP + H2O = GDP + phosphate + H(+). Its function is as follows. Zinc chaperone that directly transfers zinc cofactor to target metalloproteins, thereby activating them. Catalyzes zinc insertion into the active site of methionine aminopeptidase METAP1, which function to cleave the initiator methionine from polypeptides during or after protein translation. Mechanistically, the N-terminal psi-PxLVp motif binds to the C6H2-type zinc finger of inactive form of METAP1. After formation of the docked complex, zinc is transferred from the CXCC motif in the GTPase domain of ZNG1 to the zinc binding site in the peptidase domain of METAP1 in a process requiring GTP hydrolysis. GTP/GDP exchange is required for release of active METAP1. This chain is Zinc-regulated GTPase metalloprotein activator 1, found in Danio rerio (Zebrafish).